Consider the following 92-residue polypeptide: Small ribosomal subunit protein bS20 (92 aa).

The disordered stretch occupies residues Met-1–His-20.

The protein belongs to the bacterial ribosomal protein bS20 family.

Binds directly to 16S ribosomal RNA. The chain is Small ribosomal subunit protein bS20 from Methylococcus capsulatus (strain ATCC 33009 / NCIMB 11132 / Bath).